The sequence spans 440 residues: Ferredoxin--NADP reductase (440 aa).

The region spanning 17–75 (SRVFVYEVVGMRQNEETDQTNYPIRKSGSVFIRVPYNRMNQEMQRITRLGGKIVSIQTV) is the CpcD-like domain. Residues 98-142 (AKSEGNGKATPVKTDSGAKGFAKPPAEEQLKKKDNKGNTMTQAKA) form a disordered region. Over residues 122–133 (PAEEQLKKKDNK) the composition is skewed to basic and acidic residues. In terms of domain architecture, FAD-binding FR-type spans 155-279 (NAPFIGKVIS…TGPVGKEMLL (125 aa)). FAD is bound by residues 214–217 (RLYS), 235–237 (CVR), Tyr241, 253–255 (VCS), and Thr294. Positions 217 and 237 each coordinate NADP(+). NADP(+)-binding positions include Thr294, 330–331 (VP), 360–361 (SR), 370–374 (RMYIQ), 399–400 (GL), and Glu438.

Belongs to the ferredoxin--NADP reductase type 1 family. Requires FAD as cofactor.

It is found in the cellular thylakoid membrane. It carries out the reaction 2 reduced [2Fe-2S]-[ferredoxin] + NADP(+) + H(+) = 2 oxidized [2Fe-2S]-[ferredoxin] + NADPH. The chain is Ferredoxin--NADP reductase (petH) from Nostoc sp. (strain PCC 7120 / SAG 25.82 / UTEX 2576).